The primary structure comprises 1146 residues: MGPAPAGEQLRGATGEPEVMEPALEGTGKEGKKASSRKRTLAEPPAKGLLQPVKLSRAELYKEPTNEELNRLRETEILFHSSLLRLQVEELLKEVRLSEKKKDRIDAFLREVNQRVVRVPSVPETELTDQAWLPAGVRVPLHQVPYAVKGCFRFLPPAQVTVVGSYLLGTCIRPDINVDVALTMPREILQDKDGLNQRYFRKRALYLAHLAHHLAQDPLFGSVCFSYTNGCHLKPSLLLRPRGKDERLVTVRLHPCPPPDFFRPCRLLPTKNNVRSAWYRGQSPAGDGSPEPPTPRYNTWVLQDTVLESHLQLLSTILSSAQGLKDGVALLKVWLRQRELDKGQGGFTGFLVSMLVVFLVSTRKIHTTMSGYQVLRSVLQFLATTDLTVNGISLCLSSDPSLPALADFHQAFSVVFLDSSGHLNLCADVTASTYHQVQHEARLSMMLLDSRADDGFHLLLMTPKPMIRAFDHVLHLRPLSRLQAACHRLKLWPELQDNGGDYVSAALGPLTTLLEQGLGARLNLLAHSRPPVPEWDISQDPPKHKDSGTLTLGLLLRPEGLTSVLELGPEADQPEAAKFRQFWGSRSELRRFQDGAIREAVVWEAASMSQKRLIPHQVVTHLLALHADIPETCVHYVGGPLDALIQGLKETSSTGEEALVAAVRCYDDLSRLLWGLEGLPLTVSAVQGAHPVLRYTEVFPPTPVRPAFSFYETLRERSSLLPRLDKPCPAYVEPMTVVCHLEGSGQWPQDAEAVQRVRAAFQLRLAELLTQQHGLQCRATATHTDVLKDGFVFRIRVAYQREPQILKEVQSPEGMISLRDTAASLRLERDTRQLPLLTSALHGLQQQHPAFSGVARLAKRWVRAQLLGEGFADESLDLVAAALFLHPEPFTPPSSPQVGFLRFLFLVSTFDWKNNPLFVNLNNELTVEEQVEIRSGFLAARAQLPVMVIVTPQDRKNSVWTQDGPSAQILQQLVVLAAEALPMLEKQLMDPRGPGDIRTVFRPPLDIYDVLIRLSPRHIPRHRQAVDSPAASFCRGLLSQPGPSSLMPVLGYDPPQLYLTQLREAFGDLALFFYDQHGGEVIGVLWKPTSFQPQPFKASSTKGRMVMSRGGELVMVPNVEAILEDFAVLGEGLVQTVEARSERWTV.

The segment at 1–48 is disordered; it reads MGPAPAGEQLRGATGEPEVMEPALEGTGKEGKKASSRKRTLAEPPAKG. Ser-56 is subject to Phosphoserine. Residues 83–114 adopt a coiled-coil conformation; the sequence is LLRLQVEELLKEVRLSEKKKDRIDAFLREVNQ. Ser-283, Ser-289, and Ser-811 each carry phosphoserine.

The protein belongs to the NRAP family. As to quaternary structure, part of the small subunit (SSU) processome, composed of more than 70 proteins and the RNA chaperone small nucleolar RNA (snoRNA) U3. Interacts with RRP7A; required for NOL6 localization to nucleolus.

It is found in the nucleus. Its subcellular location is the nucleolus. It localises to the chromosome. Part of the small subunit (SSU) processome, first precursor of the small eukaryotic ribosomal subunit. During the assembly of the SSU processome in the nucleolus, many ribosome biogenesis factors, an RNA chaperone and ribosomal proteins associate with the nascent pre-rRNA and work in concert to generate RNA folding, modifications, rearrangements and cleavage as well as targeted degradation of pre-ribosomal RNA by the RNA exosome. This is Nucleolar protein 6 from Homo sapiens (Human).